Consider the following 379-residue polypeptide: Putative F-box protein At5g62660 (379 aa).

The F-box domain occupies 35 to 84 (ALVAPEIPLDLLIEILTKLPAKSLMRFKCVSKLWSSLIRSRFFSNCYLTV).

The sequence is that of Putative F-box protein At5g62660 from Arabidopsis thaliana (Mouse-ear cress).